Reading from the N-terminus, the 248-residue chain is Probable transcriptional regulatory protein FTN_1028 (248 aa).

Belongs to the TACO1 family.

The protein localises to the cytoplasm. This Francisella tularensis subsp. novicida (strain U112) protein is Probable transcriptional regulatory protein FTN_1028.